The chain runs to 101 residues: Large ribosomal subunit protein bL28 (101 aa).

The protein belongs to the bacterial ribosomal protein bL28 family.

This Rhodopseudomonas palustris (strain BisB18) protein is Large ribosomal subunit protein bL28.